We begin with the raw amino-acid sequence, 51 residues long: Large ribosomal subunit protein eL39 (51 aa).

A disordered region spans residues M1–M23. Residues S7–Q19 are compositionally biased toward basic residues.

The protein belongs to the eukaryotic ribosomal protein eL39 family. In terms of assembly, interacts with impact.

The protein is Large ribosomal subunit protein eL39 (rpl-39) of Caenorhabditis elegans.